The primary structure comprises 193 residues: Peptidyl-tRNA hydrolase (193 aa).

Tyr16 serves as a coordination point for tRNA. His21 acts as the Proton acceptor in catalysis. 3 residues coordinate tRNA: Phe66, Asn68, and Asn114.

Belongs to the PTH family. As to quaternary structure, monomer.

It localises to the cytoplasm. The enzyme catalyses an N-acyl-L-alpha-aminoacyl-tRNA + H2O = an N-acyl-L-amino acid + a tRNA + H(+). Its function is as follows. Hydrolyzes ribosome-free peptidyl-tRNAs (with 1 or more amino acids incorporated), which drop off the ribosome during protein synthesis, or as a result of ribosome stalling. Catalyzes the release of premature peptidyl moieties from peptidyl-tRNA molecules trapped in stalled 50S ribosomal subunits, and thus maintains levels of free tRNAs and 50S ribosomes. This chain is Peptidyl-tRNA hydrolase, found in Trichlorobacter lovleyi (strain ATCC BAA-1151 / DSM 17278 / SZ) (Geobacter lovleyi).